We begin with the raw amino-acid sequence, 1435 residues long: RNA-directed RNA polymerase VP1 (1435 aa).

The RdRp catalytic domain occupies 604–880 (VLHNVLRPAY…KGVLGAPELF (277 aa)).

The protein belongs to the reoviridae RNA-directed RNA polymerase family. In terms of assembly, interacts with VP4.

It carries out the reaction RNA(n) + a ribonucleoside 5'-triphosphate = RNA(n+1) + diphosphate. RNA-directed RNA polymerase involved in transcription and genome replication. Following infection, catalyzes the synthesis of fully conservative plus strands. After core assembly, which consists in recruitment of one capped plus-strand for each genomic segments and polymerase complexes, the polymerase switches mode and catalyzes the synthesis of complementary minus-strands. The chain is RNA-directed RNA polymerase VP1 from Callospermophilus lateralis (Golden-mantled ground squirrel).